Here is a 229-residue protein sequence, read N- to C-terminus: MSAEAMNMNMNQDAVFIPPPEGEQYERKEKQEIQQTSYLQSQVKVPLVNLPAPFFSTSFSAQEILGEGFQASISRISAVSEELSSIEIPELAEEARRDFAAKTREQEMLSANYQKEVERKTEAYRKQQEVEADKIRKELEKQHLRDVEFRKDIVEMAIENQKKMIDVESRYAKKDMDRERVKVRMMLEQQKFHSDIQVNLDSSAAGTETGGQVVSESQKFTERNRQIKQ.

A disordered region spans residues Met-1 to Glu-29. Residues Leu-109–Arg-145 are a coiled coil. CAHS motif regions lie at residues Tyr-124 to Gln-142 and Gln-161 to Glu-179. Polar residues predominate over residues Ser-202–Gln-218. The tract at residues Ser-202 to Gln-229 is disordered. The span at Lys-219–Gln-229 shows a compositional bias: basic and acidic residues.

The protein belongs to the Cytosolic-abundant heat soluble protein (CAHS) family.

The protein localises to the cytoplasm. Functionally, CAHS proteins are cytosolic heat soluble proteins that seem to contribute to the anhydrobiosis in tardigrades, but their specific mechanisms are yet to be identified. It is possible that protection during anhydrobiosis might occur via the stabilization of vitrifying small molecules such as sugars, but not via the direct glass transition of CAHS proteins themselves. The protein is Cytosolic-abundant heat soluble protein 107838 of Paramacrobiotus richtersi (Water bear).